A 6077-amino-acid polypeptide reads, in one-letter code: Nonribosomal peptide synthetase nlsA (6077 aa).

The segment at 417 to 618 (VFAYAPLIHG…LGRKDSQIKL (202 aa)) is adenylation 1. The Carrier 1 domain maps to 751–827 (HSEVTVEDRL…DLVTRVQEIK (77 aa)). Ser788 carries the O-(pantetheine 4'-phosphoryl)serine modification. Condensation regions lie at residues 842–1267 (LSPI…GKRL) and 1309–1737 (EDIY…KQRI). Adenylation stretches follow at residues 1757–2149 (QEKM…YLGE) and 2755–3157 (DRVI…QVKL). The Carrier 2 domain maps to 3297–3373 (AVERAAESTL…DMAKCCDDTE (77 aa)). The residue at position 3334 (Ser3334) is an O-(pantetheine 4'-phosphoryl)serine. Residues 3524–3779 (DSRYRQCLYK…LLSVPRDSLM (256 aa)) form a condensation 3 region. Residues 3816–4213 (ENAIMHPQAT…LGRKDHQVKL (398 aa)) form an adenylation 4 region. The 77-residue stretch at 4361-4437 (REGDATPAII…ELAVSCGTKP (77 aa)) folds into the Carrier 3 domain. Residue Ser4398 is modified to O-(pantetheine 4'-phosphoryl)serine. Condensation regions lie at residues 4451–4869 (PLSP…RVLE) and 4916–5260 (VEDI…EDKT). Residues 5334-5410 (RAPNDSEKQL…NMMALINDRK (77 aa)) enclose the Carrier 4 domain. At Ser5371 the chain carries O-(pantetheine 4'-phosphoryl)serine. Positions 5476–5885 (DVLPVTDFQA…SLVANPNVAL (410 aa)) are condensation 6. The region spanning 5921–6004 (SEILVHSDLI…GHMAVLALNM (84 aa)) is the Carrier 5 domain. A compositionally biased stretch (low complexity) spans 6013-6027 (DSDAAPAPAYAPVDA). The interval 6013–6047 (DSDAAPAPAYAPVDARASRNVSTSRQQQEGLPLPA) is disordered. Over residues 6031-6041 (RNVSTSRQQQE) the composition is skewed to polar residues.

The protein belongs to the NRP synthetase family.

Its pathway is secondary metabolite biosynthesis. Nonribosomal peptide synthetase involved in the synthesis of nidulanin A and derived compounds. Nidulanin A is a tetracyclopeptide with the sequence L-Phe-L-Kyn-L-Val-D-Val and an isoprene unit N-linked to the amino group of L-kynurenine. The NRPS nlsA is responsible of the synthesis of the cyclopeptide and the prenyltransferase nptA adds the isoprene unit on the L-kynurenine residue of nidulanin A. Further modifications lead to additional oxygenated related compounds. The sequence is that of Nonribosomal peptide synthetase nlsA from Emericella nidulans (strain FGSC A4 / ATCC 38163 / CBS 112.46 / NRRL 194 / M139) (Aspergillus nidulans).